The chain runs to 352 residues: Alanine racemase (352 aa).

Lys-33 (proton acceptor; specific for D-alanine) is an active-site residue. Lys-33 carries the N6-(pyridoxal phosphate)lysine modification. Position 129 (Arg-129) interacts with substrate. Tyr-250 functions as the Proton acceptor; specific for L-alanine in the catalytic mechanism. Position 298 (Met-298) interacts with substrate.

Belongs to the alanine racemase family. The cofactor is pyridoxal 5'-phosphate.

The enzyme catalyses L-alanine = D-alanine. It participates in amino-acid biosynthesis; D-alanine biosynthesis; D-alanine from L-alanine: step 1/1. Catalyzes the interconversion of L-alanine and D-alanine. May also act on other amino acids. This Neisseria meningitidis serogroup B (strain ATCC BAA-335 / MC58) protein is Alanine racemase (alr).